An 874-amino-acid polypeptide reads, in one-letter code: Alanine--tRNA ligase (874 aa).

The Zn(2+) site is built by histidine 562, histidine 566, cysteine 665, and histidine 669.

Belongs to the class-II aminoacyl-tRNA synthetase family. Zn(2+) serves as cofactor.

It is found in the cytoplasm. It carries out the reaction tRNA(Ala) + L-alanine + ATP = L-alanyl-tRNA(Ala) + AMP + diphosphate. Its function is as follows. Catalyzes the attachment of alanine to tRNA(Ala) in a two-step reaction: alanine is first activated by ATP to form Ala-AMP and then transferred to the acceptor end of tRNA(Ala). Also edits incorrectly charged Ser-tRNA(Ala) and Gly-tRNA(Ala) via its editing domain. The sequence is that of Alanine--tRNA ligase from Pseudomonas fluorescens (strain ATCC BAA-477 / NRRL B-23932 / Pf-5).